The following is a 417-amino-acid chain: MIEVLLVTICLAAFPYQGSSIILESGNVNDYEVVYPRKITALSEGAAQQKYEDTMQYEFKVNGEPVVLHLEKNKELFAKDYSETHYSPDGTRITTYPSVEDHCYYQGRIHNDADSTASISTCNGLKGHFKFHGERYFIEPLKLPGSEAHAVYKYENIEKEDETPKMCGVIQKWKSDELIKKPFRLNLTPQQQESPQAKVYLVIVADKSMVDKHNGNIKKIEEQGHQMVNTMNECYRPMGIIIIMAGIECWTTNDFFEVKSSAKETLYSFAKWRVEDLSKRKPHNDAQFLTNKDFDGNTVGLAFVGGICNEKYCAGVVQDHTKVPLLMAITMGHEIGHNLGMEHDEANCKCKACVMAPEVNNNPTKKFSDCSRNYYQKFLKDRKPECLFKKPLRTDTVSTPVSGNEPLEVITMDDFYA.

The N-terminal stretch at 1 to 20 is a signal peptide; that stretch reads MIEVLLVTICLAAFPYQGSS. Residues 21 to 189 constitute a propeptide that is removed on maturation; sequence IILESGNVND…KKPFRLNLTP (169 aa). The 195-residue stretch at 197 to 391 folds into the Peptidase M12B domain; sequence AKVYLVIVAD…RKPECLFKKP (195 aa). 3 disulfide bridges follow: C308-C386, C348-C370, and C350-C353. H333 is a binding site for Zn(2+). Residue E334 is part of the active site. Residues H337 and H343 each contribute to the Zn(2+) site. The propeptide occupies 392 to 417; it reads LRTDTVSTPVSGNEPLEVITMDDFYA.

Belongs to the venom metalloproteinase (M12B) family. P-I subfamily. In terms of assembly, monomer. Zn(2+) serves as cofactor. As to expression, expressed by the venom gland.

Its subcellular location is the secreted. Inhibited by EDTA, and O-phenanthrolene. Functionally, snake venom zinc metalloprotease that inhibits platelet aggregation by binding specifically to platelet glycoprotein VI (GP6) and platelet glycoprotein Ib alpha (GP1BA). It inhibits the interaction between collagen and platelet GP6 by cleaving GP6 (at '225-Glu-|-Ala-226' and '238-Val-|-Phe-239' bonds), and inhibits vWF-induced platelet aggregation by cleaving GP1BA and vWF. Cleavage of GP1BA occurs at two distinct sites to generate two soluble fragments. It also cleaves alpha- (FGA) and subsequently the gamma-chain (FGG) of fibrinogen, leaving the beta-chain unaffected. It also inhibits collagen-, convulxin- and ristocetin-induced platelet aggregation. It blocks the adhesion of platelet to immobilized collagen, but only exerts a slight inhibition to fibrinogen. In vivo, it exerts potent antithrombotic effect. The protein is Snake venom metalloproteinase kistomin of Calloselasma rhodostoma (Malayan pit viper).